A 613-amino-acid polypeptide reads, in one-letter code: tRNA 5-methylaminomethyl-2-thiouridine biosynthesis bifunctional protein MnmC (613 aa).

The tract at residues 1–225 (MKKAKLIFKD…KREMIKAYLE (225 aa)) is tRNA (mnm(5)s(2)U34)-methyltransferase. An FAD-dependent cmnm(5)s(2)U34 oxidoreductase region spans residues 252-613 (IGAGISSAVL…FLVRKLKKGL (362 aa)).

The protein in the N-terminal section; belongs to the methyltransferase superfamily. tRNA (mnm(5)s(2)U34)-methyltransferase family. In the C-terminal section; belongs to the DAO family. It depends on FAD as a cofactor.

It is found in the cytoplasm. The enzyme catalyses 5-aminomethyl-2-thiouridine(34) in tRNA + S-adenosyl-L-methionine = 5-methylaminomethyl-2-thiouridine(34) in tRNA + S-adenosyl-L-homocysteine + H(+). Its function is as follows. Catalyzes the last two steps in the biosynthesis of 5-methylaminomethyl-2-thiouridine (mnm(5)s(2)U) at the wobble position (U34) in tRNA. Catalyzes the FAD-dependent demodification of cmnm(5)s(2)U34 to nm(5)s(2)U34, followed by the transfer of a methyl group from S-adenosyl-L-methionine to nm(5)s(2)U34, to form mnm(5)s(2)U34. The sequence is that of tRNA 5-methylaminomethyl-2-thiouridine biosynthesis bifunctional protein MnmC from Campylobacter jejuni subsp. doylei (strain ATCC BAA-1458 / RM4099 / 269.97).